The following is a 452-amino-acid chain: Imaginal disk growth factor 6 (452 aa).

An N-terminal signal peptide occupies residues 1-18 (MIIKALAIVSLCLASIQA). Residues 29–452 (KHLVCYYDSA…LRAIKYRLTN (424 aa)) enclose the GH18 domain. A disulfide bridge connects residues cysteine 33 and cysteine 60. Asparagine 233 carries an N-linked (GlcNAc...) asparagine glycan. A disulfide bridge links cysteine 352 with cysteine 435.

The protein belongs to the glycosyl hydrolase 18 family. IDGF subfamily. In terms of processing, glycosylated. In terms of tissue distribution, in larvae, it is expressed in the fat body and by hemocytes.

The protein resides in the secreted. Probably required to stimulate the proliferation, polarization and motility of imaginal disk cells. May act by stabilizing the binding of insulin-like peptides to its receptor through a simultaneous interaction with both molecules to form a multiprotein signaling complex. The chain is Imaginal disk growth factor 6 from Drosophila melanogaster (Fruit fly).